The following is a 637-amino-acid chain: Probable potassium transport system protein Kup (637 aa).

12 consecutive transmembrane segments (helical) span residues 24 to 44 (LAIA…LYAL), 64 to 84 (VISL…LLFV), 113 to 133 (AGAL…DAVI), 151 to 171 (PHLS…LFWI), 182 to 202 (LFGP…VYHI), 225 to 245 (LLQA…AEAL), 261 to 281 (AYGL…ALLI), 290 to 310 (PFFL…STVA), 351 to 371 (IYVP…VIGF), 381 to 401 (YGIA…VVMV), 409 to 429 (LLVG…FGAN), and 433 to 453 (VAQG…LLMT).

Belongs to the HAK/KUP transporter (TC 2.A.72) family.

The protein localises to the cell inner membrane. It catalyses the reaction K(+)(in) + H(+)(in) = K(+)(out) + H(+)(out). Transport of potassium into the cell. Likely operates as a K(+):H(+) symporter. The protein is Probable potassium transport system protein Kup of Burkholderia ambifaria (strain ATCC BAA-244 / DSM 16087 / CCUG 44356 / LMG 19182 / AMMD) (Burkholderia cepacia (strain AMMD)).